The chain runs to 734 residues: Photosystem I P700 chlorophyll a apoprotein A2 (734 aa).

Helical transmembrane passes span 46 to 69, 135 to 158, 175 to 199, 273 to 291, 330 to 353, 369 to 395, 417 to 439, and 517 to 535; these read IFAS…FHVA, LYTG…LHLQ, LNHH…HVAI, IAHH…GHMY, IHFQ…QHMY, AALY…IFFI, AIKS…LYVH, and FLVH…LILV. Residues Cys559 and Cys568 each contribute to the [4Fe-4S] cluster site. A run of 2 helical transmembrane segments spans residues 575 to 596 and 643 to 665; these read AFYL…YWHW and LSVW…MFLI. Residues His654, Met662, and Tyr670 each coordinate chlorophyll a. A phylloquinone-binding site is contributed by Trp671. The chain crosses the membrane as a helical span at residues 707 to 727; that stretch reads LVGLAHFSVGYIFTYAAFLIA.

This sequence belongs to the PsaA/PsaB family. The PsaA/B heterodimer binds the P700 chlorophyll special pair and subsequent electron acceptors. PSI consists of a core antenna complex that captures photons, and an electron transfer chain that converts photonic excitation into a charge separation. The eukaryotic PSI reaction center is composed of at least 11 subunits. It depends on P700 is a chlorophyll a/chlorophyll a' dimer, A0 is one or more chlorophyll a, A1 is one or both phylloquinones and FX is a shared 4Fe-4S iron-sulfur center. as a cofactor.

It is found in the plastid. Its subcellular location is the chloroplast thylakoid membrane. The catalysed reaction is reduced [plastocyanin] + hnu + oxidized [2Fe-2S]-[ferredoxin] = oxidized [plastocyanin] + reduced [2Fe-2S]-[ferredoxin]. PsaA and PsaB bind P700, the primary electron donor of photosystem I (PSI), as well as the electron acceptors A0, A1 and FX. PSI is a plastocyanin-ferredoxin oxidoreductase, converting photonic excitation into a charge separation, which transfers an electron from the donor P700 chlorophyll pair to the spectroscopically characterized acceptors A0, A1, FX, FA and FB in turn. Oxidized P700 is reduced on the lumenal side of the thylakoid membrane by plastocyanin. This Drimys granadensis protein is Photosystem I P700 chlorophyll a apoprotein A2.